The following is a 217-amino-acid chain: uncharacterized protein (217 aa).

The PilZ domain occupies 98-203 (QRRQYVRTDA…GDQQALLQYC (106 aa)).

This is an uncharacterized protein from Bacillus subtilis (strain 168).